We begin with the raw amino-acid sequence, 277 residues long: (-)-trans-carveol dehydrogenase (277 aa).

10 to 32 (LITGAARGQGRSHAIKLAEEGAD) contacts NAD(+). Ser-156 is a substrate binding site. The Proton acceptor role is filled by Tyr-169.

Belongs to the short-chain dehydrogenases/reductases (SDR) family. As to quaternary structure, homotetramer.

The catalysed reaction is (1S,5R)-carveol + NAD(+) = (R)-carvone + NADH + H(+). It carries out the reaction (1S,5S)-carveol + NAD(+) = (S)-carvone + NADH + H(+). The protein operates within terpene metabolism; limonene degradation. Its activity is regulated as follows. Competitively inhibited by the product (S)- or (R)-carvone. Functionally, catalyzes the oxidation of carveol to carvone, with a strong stereoselectivity since it efficiently converts only the (6S)-stereoisomers, of which (-)-(4R,6S)-trans-carveol is the better substrate. Displays a broad substrate specificity with a preference for substituted cyclohexanols, and does not catalyze the oxidation of primary or short chain aliphatic secondary alcohols. Is also able, albeit more slowly, to oxidize limonene-1,2-diol into 1-hydroxy-2-oxolimonene. The sequence is that of (-)-trans-carveol dehydrogenase (limC) from Rhodococcus erythropolis (Arthrobacter picolinophilus).